A 263-amino-acid polypeptide reads, in one-letter code: uncharacterized protein (263 aa).

One can recognise a DOD-type homing endonuclease domain in the interval 107-246 (ILGVLNGDGS…CCSFLEKLGI (140 aa)).

This is an uncharacterized protein from Methanocaldococcus jannaschii (strain ATCC 43067 / DSM 2661 / JAL-1 / JCM 10045 / NBRC 100440) (Methanococcus jannaschii).